A 438-amino-acid polypeptide reads, in one-letter code: uncharacterized protein (438 aa).

The first 19 residues, 1 to 19 (MKKLLLAASIICLASAGLA), serve as a signal peptide directing secretion.

This is an uncharacterized protein from Rickettsia conorii (strain ATCC VR-613 / Malish 7).